The following is a 122-amino-acid chain: Large ribosomal subunit protein bL12 (122 aa).

It belongs to the bacterial ribosomal protein bL12 family. In terms of assembly, homodimer. Part of the ribosomal stalk of the 50S ribosomal subunit. Forms a multimeric L10(L12)X complex, where L10 forms an elongated spine to which 2 to 4 L12 dimers bind in a sequential fashion. Binds GTP-bound translation factors.

Forms part of the ribosomal stalk which helps the ribosome interact with GTP-bound translation factors. Is thus essential for accurate translation. The sequence is that of Large ribosomal subunit protein bL12 from Bdellovibrio bacteriovorus (strain ATCC 15356 / DSM 50701 / NCIMB 9529 / HD100).